The primary structure comprises 161 residues: Lipoprotein signal peptidase (161 aa).

Transmembrane regions (helical) follow at residues 64-84 (YRVP…AWFY) and 92-114 (VLGR…DRVR). Catalysis depends on residues Asp120 and Asp138. The chain crosses the membrane as a helical span at residues 131 to 151 (WPAFNVADSAICVGVGMLLLA).

It belongs to the peptidase A8 family.

It is found in the cell inner membrane. The catalysed reaction is Release of signal peptides from bacterial membrane prolipoproteins. Hydrolyzes -Xaa-Yaa-Zaa-|-(S,diacylglyceryl)Cys-, in which Xaa is hydrophobic (preferably Leu), and Yaa (Ala or Ser) and Zaa (Gly or Ala) have small, neutral side chains.. Its pathway is protein modification; lipoprotein biosynthesis (signal peptide cleavage). In terms of biological role, this protein specifically catalyzes the removal of signal peptides from prolipoproteins. This chain is Lipoprotein signal peptidase, found in Syntrophotalea carbinolica (strain DSM 2380 / NBRC 103641 / GraBd1) (Pelobacter carbinolicus).